The following is a 393-amino-acid chain: NAD(P)H-quinone oxidoreductase subunit H, chloroplastic (393 aa).

The protein belongs to the complex I 49 kDa subunit family. As to quaternary structure, NDH is composed of at least 16 different subunits, 5 of which are encoded in the nucleus.

The protein localises to the plastid. It is found in the chloroplast thylakoid membrane. It catalyses the reaction a plastoquinone + NADH + (n+1) H(+)(in) = a plastoquinol + NAD(+) + n H(+)(out). The catalysed reaction is a plastoquinone + NADPH + (n+1) H(+)(in) = a plastoquinol + NADP(+) + n H(+)(out). NDH shuttles electrons from NAD(P)H:plastoquinone, via FMN and iron-sulfur (Fe-S) centers, to quinones in the photosynthetic chain and possibly in a chloroplast respiratory chain. The immediate electron acceptor for the enzyme in this species is believed to be plastoquinone. Couples the redox reaction to proton translocation, and thus conserves the redox energy in a proton gradient. This chain is NAD(P)H-quinone oxidoreductase subunit H, chloroplastic, found in Nandina domestica (Heavenly bamboo).